The sequence spans 129 residues: Cocaine- and amphetamine-regulated transcript protein (129 aa).

An N-terminal signal peptide occupies residues 1 to 27 (MESSRLRLLPLLGAALLLLLPLLGARA). At tyrosine 41 the chain carries Phosphotyrosine. Serine 48 carries the post-translational modification Phosphoserine. Disulfide bonds link cysteine 95–cysteine 113, cysteine 101–cysteine 121, and cysteine 115–cysteine 128.

This sequence belongs to the CART family.

It localises to the secreted. Satiety factor closely associated with the actions of leptin and neuropeptide y; this anorectic peptide inhibits both normal and starvation-induced feeding and completely blocks the feeding response induced by neuropeptide Y and regulated by leptin in the hypothalamus. The sequence is that of Cocaine- and amphetamine-regulated transcript protein (Cartpt) from Mus musculus (Mouse).